Here is a 142-residue protein sequence, read N- to C-terminus: ATP synthase epsilon chain (142 aa).

Belongs to the ATPase epsilon chain family. As to quaternary structure, F-type ATPases have 2 components, CF(1) - the catalytic core - and CF(0) - the membrane proton channel. CF(1) has five subunits: alpha(3), beta(3), gamma(1), delta(1), epsilon(1). CF(0) has three main subunits: a, b and c.

It is found in the cell inner membrane. Produces ATP from ADP in the presence of a proton gradient across the membrane. The chain is ATP synthase epsilon chain from Shewanella baltica (strain OS185).